Here is a 1091-residue protein sequence, read N- to C-terminus: MPVSVAVCETTNVVNAALRESLGVGIGSGGASSDDKSAGEDTNSLQNHIVANAKRILMTKIEYEEVPNYQEAVLENLKSKYIVIKPTNPTNGCNLNGNTANTFGNKNNAGKIVGANGHDNNGRKLSDHPNQNHNHANPNGHHANPNELPKPKRVLYPRENIRIGWKQSERKWQVGSGMINAGNTCYLNSTLQALFHIPALANWLVSEQAHMENCNVSESGSFCIICAMAKTLQATQTTQSAVRPFLIYTKLKQICKHMIVGRQEDAHEFLRFLVEAMERAYLMRFRNYKELDQLVKETTPLGQIFGGYLRSEVRCLSCNHVSITFQHFQDLLLDIRKSDSLEEAFEGYFSREKLEDFGYKCEGCKKKVSATKQFRLERAPITLCIQLKRFSMMGNKLTKQITFKPRIDLSKFAARSPAASVQPLIYRLVSMVTHLGVSQHCGHYTAIGSTEAGSYYNFDDSYVRPIAIQSVCNTNAYIMFYELDPLQTSSPAAARANGLRLTNGHGPVPVAVPATVSSPLPSPAKFIGPQLPPGGINGYSNGHGPKTTIQFKPQHQPSHQQNGVQQSAKSPLLSTHVKVEAAAGAAALAASAAPTANGNKSSSNHSNHKSVNQQHYLPISSEDEDSEDEVKARPTVQLPSMPKMDDCMDSGKPKSPVKTPVKTPLKSLVPYESASEEEEVVPLPNPNARKRSSDSSDSEHEPTTSSVQLNGHSKTNGSLSNGSSKSTDAIDEIFKSLKGYQAKKKSADSEDDDDDEDEPNNQLTNGWHPQKQSQSQSRSGPPSPKTPPSPAVIKSKTGIWKVTRDDGDDDEDDDDDDDEVVEEARAVRTPVKNHRNPFASSKTATDSPTTPGAKRQKLLNGSAIKTQQQPRAGNGYQSEATANGGTVNELLKQSHRGYSSSVLSWNGKPAELEKEPFVLVCAKRIAGHGSLDGSGSGSNTDIIDTEIPAAAVNFPSGSCSFSLLADARDQRQRDLADDEENEMDRGRQRKVKSGSAKISNSTPGYNPFMEFENQKRWHKNGGGGGFPRFYQNQNFRQGFQQRNKFKFNRFGGPGSAKFQQQRALQRHLAAGGGFTRRQPTHSAQQQQQQQS.

The disordered stretch occupies residues 115-152 (ANGHDNNGRKLSDHPNQNHNHANPNGHHANPNELPKPK). Over residues 128 to 146 (HPNQNHNHANPNGHHANPN) the composition is skewed to low complexity. The USP domain maps to 176–484 (SGMINAGNTC…NAYIMFYELD (309 aa)). The active-site Nucleophile is the C185. The Proton acceptor role is filled by H443. 2 positions are modified to phosphoserine: S518 and S522. 4 disordered regions span residues 523–572 (PAKF…KSPL), 594–892 (PTAN…ELLK), 972–1007 (QRDL…GYNP), and 1068–1091 (LAAG…QQQS). The span at 547–572 (TTIQFKPQHQPSHQQNGVQQSAKSPL) shows a compositional bias: polar residues. Low complexity predominate over residues 594–612 (PTANGNKSSSNHSNHKSVN). Basic and acidic residues predominate over residues 643 to 652 (KMDDCMDSGK). Positions 653 to 667 (PKSPVKTPVKTPLKS) are enriched in low complexity. T659 and T663 each carry phosphothreonine. Phosphoserine is present on residues S673 and S675. Over residues 691–702 (RSSDSSDSEHEP) the composition is skewed to basic and acidic residues. The segment covering 703–727 (TTSSVQLNGHSKTNGSLSNGSSKST) has biased composition (polar residues). S749 carries the phosphoserine modification. Acidic residues predominate over residues 749-759 (SEDDDDDEDEP). Residues 769-780 (PQKQSQSQSRSG) are compositionally biased toward low complexity. The segment covering 781-790 (PPSPKTPPSP) has biased composition (pro residues). Residue S783 is modified to Phosphoserine. T786 bears the Phosphothreonine mark. S789 is subject to Phosphoserine. Positions 806–821 (DGDDDEDDDDDDDEVV) are enriched in acidic residues. T829 bears the Phosphothreonine mark. Polar residues-rich tracts occupy residues 838–850 (FASS…SPTT) and 863–886 (AIKT…NGGT). At S847 the chain carries Phosphoserine. T850 is subject to Phosphothreonine.

This sequence belongs to the peptidase C19 family. Interacts with atms/PAF1, but not with CycT.

Its subcellular location is the nucleus. The protein resides in the nucleolus. It catalyses the reaction Thiol-dependent hydrolysis of ester, thioester, amide, peptide and isopeptide bonds formed by the C-terminal Gly of ubiquitin (a 76-residue protein attached to proteins as an intracellular targeting signal).. Required for maintaining multiple types of adult stem cells, including male and female germline, epithelial follicle cell and intestinal stem cells. May function as a transcriptional repressor by continually deubiquiting histone H2B at the promoters of genes critical for cellular differentiation, thereby preventing histone H3 'Lys-4' trimethylation (H3K4). Controls selective autophagy activation by ubiquitinated proteins. This is Ubiquitin carboxyl-terminal hydrolase 36 (Usp36) from Drosophila ananassae (Fruit fly).